The primary structure comprises 491 residues: Chromosomal replication initiator protein DnaA (491 aa).

Residues 1-86 are domain I, interacts with DnaA modulators; that stretch reads MTDELNSQFT…VEALSRRLGE (86 aa). The domain II stretch occupies residues 86–150; the sequence is ENVELGVRIA…GADKAETPDT (65 aa). The tract at residues 151–367 is domain III, AAA+ region; that stretch reads SLNARYTFES…GALIRVTAFA (217 aa). 4 residues coordinate ATP: glycine 195, glycine 197, lysine 198, and threonine 199. Positions 368–491 are domain IV, binds dsDNA; it reads SLNKSPIELS…TARIRQRSRH (124 aa).

Belongs to the DnaA family. In terms of assembly, oligomerizes as a right-handed, spiral filament on DNA at oriC.

Its subcellular location is the cytoplasm. Functionally, plays an essential role in the initiation and regulation of chromosomal replication. ATP-DnaA binds to the origin of replication (oriC) to initiate formation of the DNA replication initiation complex once per cell cycle. Binds the DnaA box (a 9 base pair repeat at the origin) and separates the double-stranded (ds)DNA. Forms a right-handed helical filament on oriC DNA; dsDNA binds to the exterior of the filament while single-stranded (ss)DNA is stabiized in the filament's interior. The ATP-DnaA-oriC complex binds and stabilizes one strand of the AT-rich DNA unwinding element (DUE), permitting loading of DNA polymerase. After initiation quickly degrades to an ADP-DnaA complex that is not apt for DNA replication. Binds acidic phospholipids. This chain is Chromosomal replication initiator protein DnaA, found in Mycobacteroides abscessus (strain ATCC 19977 / DSM 44196 / CCUG 20993 / CIP 104536 / JCM 13569 / NCTC 13031 / TMC 1543 / L948) (Mycobacterium abscessus).